A 229-amino-acid polypeptide reads, in one-letter code: Thiamine import ATP-binding protein ThiQ (229 aa).

In terms of domain architecture, ABC transporter spans Leu-2–Met-229. Gly-32 to Ser-39 provides a ligand contact to ATP.

It belongs to the ABC transporter superfamily. Thiamine importer (TC 3.A.1.19.1) family. As to quaternary structure, the complex is composed of two ATP-binding proteins (ThiQ), two transmembrane proteins (ThiP) and a solute-binding protein (ThiB).

The protein resides in the cell inner membrane. The catalysed reaction is thiamine(out) + ATP + H2O = thiamine(in) + ADP + phosphate + H(+). Part of the ABC transporter complex ThiBPQ involved in thiamine import. Responsible for energy coupling to the transport system. This Jannaschia sp. (strain CCS1) protein is Thiamine import ATP-binding protein ThiQ.